A 1189-amino-acid polypeptide reads, in one-letter code: Intraflagellar transport protein 122 homolog (1189 aa).

WD repeat units lie at residues 16 to 54 (KLEQ…MIQP), 57 to 97 (GHKD…LKYT), 99 to 135 (NDSI…VSKH), 137 to 175 (VSSK…KVKI), 180 to 223 (GALS…VGKD), 225 to 264 (VLGF…LGPI), 266 to 306 (EQNS…HGLY), and 459 to 498 (KQAT…LLFQ).

In terms of assembly, component of the IFT complex A (IFT-A) complex.

It localises to the cell projection. Its subcellular location is the cilium. It is found in the cytoplasm. The protein localises to the cytoskeleton. The protein resides in the cilium basal body. Its function is as follows. Required for cilia formation during embryonal development. Acts as a negative regulator of Shh signaling. This Xenopus tropicalis (Western clawed frog) protein is Intraflagellar transport protein 122 homolog (ift122).